Reading from the N-terminus, the 356-residue chain is MLPPRTDPPPAQHSDDAVRLTDDDAASARLSAAQLGYLQDPFASLLYRPPMPQPGAFAPQAVGRARKPPLINVGTHHRTWGIDRLVDRFLQRGGKQVVSLGAGSDTRFWRLMSRATPPDLARYVEIDFPHLTSPKAQRIARHRKLYQYLGPSSTAMPPPGHPYTVSKGGTQLSSPLYTLLPLDLRPSPSEPASSISAILSHHVLPQLDPRLPTLFLAECLFPYMSPEDSREIIKWFGETFCSCMGVVYEMVGLDDSFGNVMKRNLAVRNLSIPGSIFSTPESQAGRFTSPMLQGGKFDSAGAKTLWQIREEDVGPEELQRISKLEILDEIEELRLVLEHYVIAWGTKGECMSSISL.

S-adenosyl-L-methionine-binding positions include arginine 78, glycine 101, aspartate 127, 183 to 184 (DL), and glutamate 218.

This sequence belongs to the methyltransferase superfamily. LCMT family.

The catalysed reaction is [phosphatase 2A protein]-C-terminal L-leucine + S-adenosyl-L-methionine = [phosphatase 2A protein]-C-terminal L-leucine methyl ester + S-adenosyl-L-homocysteine. Functionally, methylates the carboxyl group of the C-terminal leucine residue of protein phosphatase 2A catalytic subunits to form alpha-leucine ester residues. The sequence is that of Leucine carboxyl methyltransferase 1 (PPM1) from Cryptococcus neoformans var. neoformans serotype D (strain JEC21 / ATCC MYA-565) (Filobasidiella neoformans).